A 300-amino-acid chain; its full sequence is Hemagglutinin 1 (300 aa).

A helical membrane pass occupies residues 200-221 (FIFATVVFIFLQAGRVPEIIAD).

Its subcellular location is the cell membrane. In terms of biological role, induces agglutination of neuraminidase-treated erythrocytes. This is Hemagglutinin 1 (hag1) from Eikenella corrodens.